Consider the following 267-residue polypeptide: Hydrolase FUB4 (267 aa).

Catalysis depends on charge relay system residues serine 93, aspartate 183, and histidine 243.

It belongs to the AB hydrolase 3 family.

It functions in the pathway mycotoxin biosynthesis. In terms of biological role, hydrolase; part of the gene cluster that mediates the biosynthesis of fusaric acid, a mycotoxin with low to moderate toxicity to animals and humans, but with high phytotoxic properties. L-aspartate is suggested as fusaric acid amino acid precursor that is activated and further processed to O-acetyl-L-homoserine by cluster enzymes aspartate kinase FUB3 and homoserine O-acetyltransferase FUB5, as well as enzymes of the primary metabolism. The polyketide synthase (PKS) FUB1 generates the triketide trans-2-hexenal which is presumptively released by the hydrolase FUB4 and linked to the NRPS-bound amino acid precursor by NAD(P)-dependent dehydrogenase FUB6. FUB1, FUB4, and the non-canonical NRPS Fub8 may form an enzyme complex. Further processing of the NRPS-bound intermediate might be carried out by FUB6 and the sulfhydrylase FUB7, enabling a spontaneous electrocyclization to close the carbon backbone of fusaric acid. Dihydrofusaric acid is likely to be released via reduction by the thioester reductase (TR) domain of FUB8 whereupon the final oxidation to fusaric acid may (also) be performed by the FMN-dependent dehydrogenase FUB9. This is Hydrolase FUB4 from Fusarium oxysporum f. sp. lycopersici (strain 4287 / CBS 123668 / FGSC 9935 / NRRL 34936) (Fusarium vascular wilt of tomato).